A 719-amino-acid polypeptide reads, in one-letter code: Fatty acid oxidation complex subunit alpha (719 aa).

Residues 1 to 190 (MVYQGNRITV…KLGLVDATVA (190 aa)) are enoyl-CoA hydratase/isomerase. Aspartate 298 serves as a coordination point for substrate. Positions 313–719 (HDINEAAVLG…AAGETFYATA (407 aa)) are 3-hydroxyacyl-CoA dehydrogenase. NAD(+)-binding positions include methionine 326, aspartate 345, 402 to 404 (VVE), lysine 409, and serine 431. The active-site For 3-hydroxyacyl-CoA dehydrogenase activity is histidine 452. Residue asparagine 455 coordinates NAD(+). Position 502 (asparagine 502) interacts with substrate.

The protein in the N-terminal section; belongs to the enoyl-CoA hydratase/isomerase family. It in the C-terminal section; belongs to the 3-hydroxyacyl-CoA dehydrogenase family. As to quaternary structure, heterotetramer of two alpha chains (FadB) and two beta chains (FadA).

It carries out the reaction a (3S)-3-hydroxyacyl-CoA + NAD(+) = a 3-oxoacyl-CoA + NADH + H(+). It catalyses the reaction a (3S)-3-hydroxyacyl-CoA = a (2E)-enoyl-CoA + H2O. The enzyme catalyses a 4-saturated-(3S)-3-hydroxyacyl-CoA = a (3E)-enoyl-CoA + H2O. The catalysed reaction is (3S)-3-hydroxybutanoyl-CoA = (3R)-3-hydroxybutanoyl-CoA. It carries out the reaction a (3Z)-enoyl-CoA = a 4-saturated (2E)-enoyl-CoA. It catalyses the reaction a (3E)-enoyl-CoA = a 4-saturated (2E)-enoyl-CoA. Its pathway is lipid metabolism; fatty acid beta-oxidation. Functionally, involved in the aerobic and anaerobic degradation of long-chain fatty acids via beta-oxidation cycle. Catalyzes the formation of 3-oxoacyl-CoA from enoyl-CoA via L-3-hydroxyacyl-CoA. It can also use D-3-hydroxyacyl-CoA and cis-3-enoyl-CoA as substrate. This Psychrobacter cryohalolentis (strain ATCC BAA-1226 / DSM 17306 / VKM B-2378 / K5) protein is Fatty acid oxidation complex subunit alpha.